Consider the following 533-residue polypeptide: Conglutin beta 2 (533 aa).

The N-terminal stretch at methionine 1–glycine 30 is a signal peptide. A propeptide spanning residues glutamate 31–serine 108 is cleaved from the precursor. Composition is skewed to basic and acidic residues over residues serine 37 to proline 51 and serine 79 to glutamate 99. 2 disordered regions span residues serine 37–glutamine 123 and lysine 315–asparagine 337. 2 consecutive Cupin type-1 domains span residues tyrosine 115 to glutamine 273 and phenylalanine 332 to glutamate 494. N-linked (GlcNAc...) asparagine glycans are attached at residues asparagine 363 and asparagine 444. The interval serine 503–phenylalanine 533 is disordered.

The protein belongs to the 7S seed storage protein family. In terms of assembly, multimers. Give rise to a complex array of processed forms, due to a large number of processing sites and changes in glycosylation.

In terms of biological role, seed storage protein. Accumulates during seed development and is hydrolyzed after germination to provide a carbon and nitrogen source for the developing seedling. Has a lectin-like activity. This is Conglutin beta 2 from Lupinus albus (White lupine).